Consider the following 408-residue polypeptide: Adenylosuccinate synthetase (408 aa).

GTP-binding positions include 12 to 18 (GDEGKGK) and 40 to 42 (GHT). D13 (proton acceptor) is an active-site residue. Mg(2+)-binding residues include D13 and G40. IMP contacts are provided by residues 13 to 16 (DEGK), 38 to 41 (NAGH), T121, R135, Q213, T228, and R292. Residue H41 is the Proton donor of the active site. Residue 288–294 (TTTGRPR) coordinates substrate. Residues R294, 320-322 (KLD), and 393-395 (STS) contribute to the GTP site.

This sequence belongs to the adenylosuccinate synthetase family. In terms of assembly, homodimer. Mg(2+) is required as a cofactor.

It localises to the cytoplasm. The catalysed reaction is IMP + L-aspartate + GTP = N(6)-(1,2-dicarboxyethyl)-AMP + GDP + phosphate + 2 H(+). Its pathway is purine metabolism; AMP biosynthesis via de novo pathway; AMP from IMP: step 1/2. Plays an important role in the de novo pathway of purine nucleotide biosynthesis. Catalyzes the first committed step in the biosynthesis of AMP from IMP. This is Adenylosuccinate synthetase from Thermus thermophilus (strain ATCC BAA-163 / DSM 7039 / HB27).